Here is a 757-residue protein sequence, read N- to C-terminus: RNA-directed RNA polymerase catalytic subunit (757 aa).

Residues 50–82 are disordered; sequence SERGRWTKNTETGAPQLNPIDGPLPEDNEPSGY. Short sequence motifs (nuclear localization signal) lie at residues 187–195 and 203–216; these read RKRRVRDNV and RTIG…NKRS. The interval 249-256 is promoter-binding site; that stretch reads RGFVYFVE. Residues 286–483 form the RdRp catalytic domain; that stretch reads VRKMMTNSQD…GINMSKKKSY (198 aa).

The protein belongs to the influenza viruses polymerase PB1 family. Influenza RNA polymerase is composed of three subunits: PB1, PB2 and PA. Interacts (via N-terminus) with PA (via C-terminus). Interacts (via C-terminus) with PB2 (via N-terminus); this interaction is essential for transcription initiation. Interacts (via C-terminus) with human PKP2 (via N-terminus); the interaction competitively inhibits the interaction between the RNA polymerase subunits PB1 and PB2. In terms of processing, phosphorylated by host PRKCA.

It is found in the host nucleus. The protein localises to the host cytoplasm. The enzyme catalyses RNA(n) + a ribonucleoside 5'-triphosphate = RNA(n+1) + diphosphate. In terms of biological role, RNA-dependent RNA polymerase which is responsible for replication and transcription of virus RNA segments. The transcription of viral mRNAs occurs by a unique mechanism called cap-snatching. 5' methylated caps of cellular mRNAs are cleaved after 10-13 nucleotides by PA. In turn, these short capped RNAs are used as primers by PB1 for transcription of viral mRNAs. During virus replication, PB1 initiates RNA synthesis and copy vRNA into complementary RNA (cRNA) which in turn serves as a template for the production of more vRNAs. This Influenza A virus (strain A/Beijing/11/1956 H1N1) protein is RNA-directed RNA polymerase catalytic subunit.